The chain runs to 330 residues: ADP-L-glycero-D-manno-heptose-6-epimerase (330 aa).

NADP(+) contacts are provided by residues 10 to 11 (FI), 31 to 32 (DD), K38, K53, 74 to 78 (QGACS), and N91. Y138 functions as the Proton acceptor in the catalytic mechanism. Residue K142 coordinates NADP(+). N167 is a substrate binding site. NADP(+) is bound by residues V168 and K176. The Proton acceptor role is filled by K176. Residues R178, H185, 199–202 (FAGW), R212, and Y291 each bind substrate.

This sequence belongs to the NAD(P)-dependent epimerase/dehydratase family. HldD subfamily. As to quaternary structure, homopentamer. Requires NADP(+) as cofactor.

It catalyses the reaction ADP-D-glycero-beta-D-manno-heptose = ADP-L-glycero-beta-D-manno-heptose. It participates in nucleotide-sugar biosynthesis; ADP-L-glycero-beta-D-manno-heptose biosynthesis; ADP-L-glycero-beta-D-manno-heptose from D-glycero-beta-D-manno-heptose 7-phosphate: step 4/4. In terms of biological role, catalyzes the interconversion between ADP-D-glycero-beta-D-manno-heptose and ADP-L-glycero-beta-D-manno-heptose via an epimerization at carbon 6 of the heptose. The chain is ADP-L-glycero-D-manno-heptose-6-epimerase from Bordetella petrii (strain ATCC BAA-461 / DSM 12804 / CCUG 43448).